The sequence spans 273 residues: NH(3)-dependent NAD(+) synthetase (273 aa).

Residue 34–41 (GLSGGIDS) coordinates ATP. Aspartate 40 is a binding site for Mg(2+). Arginine 116 serves as a coordination point for deamido-NAD(+). Threonine 136 contacts ATP. Glutamate 141 lines the Mg(2+) pocket. Positions 165 and 187 each coordinate ATP.

It belongs to the NAD synthetase family. Homodimer.

It catalyses the reaction deamido-NAD(+) + NH4(+) + ATP = AMP + diphosphate + NAD(+) + H(+). It participates in cofactor biosynthesis; NAD(+) biosynthesis; NAD(+) from deamido-NAD(+) (ammonia route): step 1/1. In terms of biological role, catalyzes the ATP-dependent amidation of deamido-NAD to form NAD. Uses ammonia as a nitrogen source. In Trichlorobacter lovleyi (strain ATCC BAA-1151 / DSM 17278 / SZ) (Geobacter lovleyi), this protein is NH(3)-dependent NAD(+) synthetase.